The primary structure comprises 411 residues: Cytosolic Fe-S cluster assembly factor narfl (411 aa).

Residues cysteine 11, cysteine 124, cysteine 180, cysteine 329, and cysteine 333 each coordinate [4Fe-4S] cluster.

The protein belongs to the NARF family. Component of the CIA complex.

Component of the cytosolic iron-sulfur protein assembly (CIA) complex, a multiprotein complex that mediates the incorporation of iron-sulfur cluster into extramitochondrial Fe/S proteins. The chain is Cytosolic Fe-S cluster assembly factor narfl (narfl) from Danio rerio (Zebrafish).